The chain runs to 338 residues: Lipoate-protein ligase A (338 aa).

A BPL/LPL catalytic domain is found at 29–216 (PATQRVLFLW…AFFAHYGERV (188 aa)). ATP-binding positions include arginine 71, 76–79 (GAVF), and lysine 134. Lysine 134 provides a ligand contact to (R)-lipoate.

The protein belongs to the LplA family. Monomer.

It localises to the cytoplasm. The enzyme catalyses L-lysyl-[lipoyl-carrier protein] + (R)-lipoate + ATP = N(6)-[(R)-lipoyl]-L-lysyl-[lipoyl-carrier protein] + AMP + diphosphate + H(+). Its pathway is protein modification; protein lipoylation via exogenous pathway; protein N(6)-(lipoyl)lysine from lipoate: step 1/2. The protein operates within protein modification; protein lipoylation via exogenous pathway; protein N(6)-(lipoyl)lysine from lipoate: step 2/2. Functionally, catalyzes both the ATP-dependent activation of exogenously supplied lipoate to lipoyl-AMP and the transfer of the activated lipoyl onto the lipoyl domains of lipoate-dependent enzymes. This is Lipoate-protein ligase A from Escherichia coli (strain K12 / MC4100 / BW2952).